The chain runs to 244 residues: DNA repair protein RecO (244 aa).

Belongs to the RecO family.

Involved in DNA repair and RecF pathway recombination. The sequence is that of DNA repair protein RecO from Koribacter versatilis (strain Ellin345).